The following is a 228-amino-acid chain: MAQSNQHVSIYNPKVIVYSIGLTTAILASMSIYRSHFVRFSTSLDVPKTLFRTKHLHGKVTSVGDGDNFHFYHLPGGIFAGWGWIRETPEINKFRKLKNKTIHVRLCGVDAPERSHFGKPSQPYSEEALQWLRQFILGKKVKVKPLSVDQYNRIVGRVFIFRWNGWNDVSEEMLRNGVAIVYENKSSAEFDGMKERYLKVENKAKKKKKGLWGIERGLTPGEYKRLYK.

A helical transmembrane segment spans residues 15–37; sequence VIVYSIGLTTAILASMSIYRSHF. The TNase-like domain maps to 54-214; it reads KHLHGKVTSV…KKKKKGLWGI (161 aa). The active site involves Arg-105. A Ca(2+)-binding site is contributed by Asp-110. Active-site residues include Glu-113 and Arg-153.

Belongs to the LCL3 family.

The protein localises to the mitochondrion. It is found in the membrane. The sequence is that of Probable endonuclease LCL3 (LCL3) from Komagataella phaffii (strain GS115 / ATCC 20864) (Yeast).